The sequence spans 338 residues: MVVKVGINGFGRIGRIVFRNAVEHDDVEIVAVNDPFIETKYAAYMLKYDSTHGQFKGDIQHSSSNNLTVNNKTIHFYQERDPANIPWGKHGVDYVVESTGVFTTTEKAKAHLSGGAKKVIISAPSADAPMFVMGVNEKSYRPDISVLSNASCTTNCLAPLAKVIHDNFGIAEGLMTTIHSYTATQKTVDGPSHKDWRGGRTAAQNIIPSSTGAAKAVGKVIPALNGKLTGMAMRVPTANVSVVDLTCRTEKPVTYDQIKAAVKAASEGELKGILGYSEDALVSTDLNGDPRSSIFDASAGIALNDRFVKLISWYDNEWGYSRRVLDLIAYIAKVDAGK.

Residues 12 to 13 (RI), D34, and R80 each bind NAD(+). Residues 151-153 (SCT), T182, 211-212 (TG), and R234 contribute to the D-glyceraldehyde 3-phosphate site. C152 functions as the Nucleophile in the catalytic mechanism. Position 316 (N316) interacts with NAD(+).

This sequence belongs to the glyceraldehyde-3-phosphate dehydrogenase family. As to quaternary structure, homotetramer.

It is found in the cytoplasm. It carries out the reaction D-glyceraldehyde 3-phosphate + phosphate + NAD(+) = (2R)-3-phospho-glyceroyl phosphate + NADH + H(+). Its pathway is carbohydrate degradation; glycolysis; pyruvate from D-glyceraldehyde 3-phosphate: step 1/5. This chain is Glyceraldehyde-3-phosphate dehydrogenase (GPD), found in Paracoccidioides lutzii (strain ATCC MYA-826 / Pb01) (Paracoccidioides brasiliensis).